The primary structure comprises 494 residues: Probable cytosol aminopeptidase (494 aa).

Residues Lys260 and Asp265 each coordinate Mn(2+). Lys272 is a catalytic residue. Mn(2+)-binding residues include Asp283, Asp342, and Glu344. Arg346 is a catalytic residue.

The protein belongs to the peptidase M17 family. The cofactor is Mn(2+).

Its subcellular location is the cytoplasm. The enzyme catalyses Release of an N-terminal amino acid, Xaa-|-Yaa-, in which Xaa is preferably Leu, but may be other amino acids including Pro although not Arg or Lys, and Yaa may be Pro. Amino acid amides and methyl esters are also readily hydrolyzed, but rates on arylamides are exceedingly low.. The catalysed reaction is Release of an N-terminal amino acid, preferentially leucine, but not glutamic or aspartic acids.. Presumably involved in the processing and regular turnover of intracellular proteins. Catalyzes the removal of unsubstituted N-terminal amino acids from various peptides. In Bacillus cereus (strain Q1), this protein is Probable cytosol aminopeptidase.